The following is a 158-amino-acid chain: SsrA-binding protein (158 aa).

The interval 135–158 is disordered; the sequence is DKRKTLKDRDWERDKQRGFKKDLD. Over residues 141 to 158 the composition is skewed to basic and acidic residues; it reads KDRDWERDKQRGFKKDLD.

The protein belongs to the SmpB family.

Its subcellular location is the cytoplasm. In terms of biological role, required for rescue of stalled ribosomes mediated by trans-translation. Binds to transfer-messenger RNA (tmRNA), required for stable association of tmRNA with ribosomes. tmRNA and SmpB together mimic tRNA shape, replacing the anticodon stem-loop with SmpB. tmRNA is encoded by the ssrA gene; the 2 termini fold to resemble tRNA(Ala) and it encodes a 'tag peptide', a short internal open reading frame. During trans-translation Ala-aminoacylated tmRNA acts like a tRNA, entering the A-site of stalled ribosomes, displacing the stalled mRNA. The ribosome then switches to translate the ORF on the tmRNA; the nascent peptide is terminated with the 'tag peptide' encoded by the tmRNA and targeted for degradation. The ribosome is freed to recommence translation, which seems to be the essential function of trans-translation. The sequence is that of SsrA-binding protein from Psychrobacter cryohalolentis (strain ATCC BAA-1226 / DSM 17306 / VKM B-2378 / K5).